A 62-amino-acid polypeptide reads, in one-letter code: Photosystem II reaction center protein Z (62 aa).

The next 2 membrane-spanning stretches (helical) occupy residues 8 to 28 and 41 to 61; these read ALLA…VVFA and FSGL…NSFV.

The protein belongs to the PsbZ family. PSII is composed of 1 copy each of membrane proteins PsbA, PsbB, PsbC, PsbD, PsbE, PsbF, PsbH, PsbI, PsbJ, PsbK, PsbL, PsbM, PsbT, PsbY, PsbZ, Psb30/Ycf12, at least 3 peripheral proteins of the oxygen-evolving complex and a large number of cofactors. It forms dimeric complexes.

It localises to the plastid. The protein localises to the chloroplast thylakoid membrane. Its function is as follows. Controls the interaction of photosystem II (PSII) cores with the light-harvesting antenna, aiding in the dissipation of excitation energy within PSII. PSII is a light-driven water plastoquinone oxidoreductase, using light energy to abstract electrons from H(2)O, generating a proton gradient subsequently used for ATP formation. The protein is Photosystem II reaction center protein Z of Chlamydomonas reinhardtii (Chlamydomonas smithii).